A 117-amino-acid chain; its full sequence is MSMDHLVRIIEKKYEKKEIPDFRPGDTVRVHVKVIEGDRERTQVFEGIVIAKRGSGINRTFTVRRIGSHGVGVERIFPFHSPVVEKIEVVRKGKVRRAKLYYLRDVKGKIRIKERRD.

The protein belongs to the bacterial ribosomal protein bL19 family.

This protein is located at the 30S-50S ribosomal subunit interface and may play a role in the structure and function of the aminoacyl-tRNA binding site. The chain is Large ribosomal subunit protein bL19 from Thermotoga neapolitana (strain ATCC 49049 / DSM 4359 / NBRC 107923 / NS-E).